Reading from the N-terminus, the 350-residue chain is tRNA dimethylallyltransferase (350 aa).

34-41 (GPTASGKT) serves as a coordination point for ATP. Position 36-41 (36-41 (TASGKT)) interacts with substrate. Interaction with substrate tRNA stretches follow at residues 63 to 66 (DSAL), 187 to 191 (QRIQR), and 274 to 279 (RCVGYR).

This sequence belongs to the IPP transferase family. Monomer. It depends on Mg(2+) as a cofactor.

It catalyses the reaction adenosine(37) in tRNA + dimethylallyl diphosphate = N(6)-dimethylallyladenosine(37) in tRNA + diphosphate. In terms of biological role, catalyzes the transfer of a dimethylallyl group onto the adenine at position 37 in tRNAs that read codons beginning with uridine, leading to the formation of N6-(dimethylallyl)adenosine (i(6)A). This is tRNA dimethylallyltransferase from Paracidovorax citrulli (strain AAC00-1) (Acidovorax citrulli).